Consider the following 609-residue polypeptide: Forkhead box protein O (609 aa).

Disordered stretches follow at residues 1-89 (MDGF…KNSS) and 181-263 (KSVR…SSCG). Position 43 is a phosphothreonine; by PKB/AKT1 (T43). Residues 62 to 79 (TKASNQQLASGDPQQAMQ) are compositionally biased toward polar residues. Low complexity predominate over residues 80–89 (NANAAKKNSS). Residues 94-200 (WGNLSYADLI…ETSRYEKRRG (107 aa)) constitute a DNA-binding region (fork-head). S189 is subject to Phosphoserine; by PKB/AKT1. Composition is skewed to polar residues over residues 220 to 229 (ATPSPSSSVS) and 254 to 263 (RASSNASSCG). S257 bears the Phosphoserine; by PKB/AKT1 mark. S260, S261, and S266 each carry phosphoserine. 2 disordered regions span residues 321 to 365 (AASG…QGQG) and 384 to 411 (RDGL…DSLN). A compositionally biased stretch (pro residues) spans 327–339 (TQPPPPYQPPQQP). The segment covering 388-397 (SPNSVTTTMS) has biased composition (polar residues).

As to quaternary structure, interacts with melt.

The protein localises to the cytoplasm. Its subcellular location is the nucleus. Its function is as follows. Transcription factor involved in the regulation of the insulin signaling pathway. Consistently activates both the downstream target Thor\d4EBP and the feedback control target InR. Involved in negative regulation of the cell cycle, modulating cell growth and proliferation. In response to cellular stresses, such as nutrient deprivation or increased levels of reactive oxygen species, foxo is activated and inhibits growth through the action of target genes such as Thor. Foxo activated in the adult fat body can regulate lifespan in adults; an insulin peptide itself may function as one secondary messenger of insulin-regulated aging. Also regulates Lip4, homolog of human acid lipases, thereby acting as a key modulator of lipid metabolism by insulin signaling and integrates insulin responses to glucose and lipid homeostasis. This Drosophila virilis (Fruit fly) protein is Forkhead box protein O.